Consider the following 398-residue polypeptide: Acetate kinase (398 aa).

Asparagine 7 is a binding site for Mg(2+). Residue lysine 14 participates in ATP binding. Arginine 91 contacts substrate. Aspartate 148 (proton donor/acceptor) is an active-site residue. Residues 208-212, 283-285, and 331-335 each bind ATP; these read HLGNG, DSR, and GIGEN. Residue glutamate 384 coordinates Mg(2+).

This sequence belongs to the acetokinase family. In terms of assembly, homodimer. It depends on Mg(2+) as a cofactor. Mn(2+) serves as cofactor.

It is found in the cytoplasm. The catalysed reaction is acetate + ATP = acetyl phosphate + ADP. It functions in the pathway metabolic intermediate biosynthesis; acetyl-CoA biosynthesis; acetyl-CoA from acetate: step 1/2. Its function is as follows. Catalyzes the formation of acetyl phosphate from acetate and ATP. Can also catalyze the reverse reaction. This is Acetate kinase from Halothermothrix orenii (strain H 168 / OCM 544 / DSM 9562).